We begin with the raw amino-acid sequence, 161 residues long: Nucleotide-binding protein Glov_3198 (161 aa).

This sequence belongs to the YajQ family.

Nucleotide-binding protein. The polypeptide is Nucleotide-binding protein Glov_3198 (Trichlorobacter lovleyi (strain ATCC BAA-1151 / DSM 17278 / SZ) (Geobacter lovleyi)).